Reading from the N-terminus, the 426-residue chain is D-tagatose-1,6-bisphosphate aldolase subunit KbaZ (426 aa).

This sequence belongs to the GatZ/KbaZ family. KbaZ subfamily. In terms of assembly, forms a complex with KbaY.

Its pathway is carbohydrate metabolism; D-tagatose 6-phosphate degradation; D-glyceraldehyde 3-phosphate and glycerone phosphate from D-tagatose 6-phosphate: step 2/2. Its function is as follows. Component of the tagatose-1,6-bisphosphate aldolase KbaYZ that is required for full activity and stability of the Y subunit. Could have a chaperone-like function for the proper and stable folding of KbaY. When expressed alone, KbaZ does not show any aldolase activity. This Escherichia coli O7:K1 (strain IAI39 / ExPEC) protein is D-tagatose-1,6-bisphosphate aldolase subunit KbaZ.